Consider the following 476-residue polypeptide: Aspartyl/glutamyl-tRNA(Asn/Gln) amidotransferase subunit B (476 aa).

It belongs to the GatB/GatE family. GatB subfamily. In terms of assembly, heterotrimer of A, B and C subunits.

It carries out the reaction L-glutamyl-tRNA(Gln) + L-glutamine + ATP + H2O = L-glutaminyl-tRNA(Gln) + L-glutamate + ADP + phosphate + H(+). The enzyme catalyses L-aspartyl-tRNA(Asn) + L-glutamine + ATP + H2O = L-asparaginyl-tRNA(Asn) + L-glutamate + ADP + phosphate + 2 H(+). Functionally, allows the formation of correctly charged Asn-tRNA(Asn) or Gln-tRNA(Gln) through the transamidation of misacylated Asp-tRNA(Asn) or Glu-tRNA(Gln) in organisms which lack either or both of asparaginyl-tRNA or glutaminyl-tRNA synthetases. The reaction takes place in the presence of glutamine and ATP through an activated phospho-Asp-tRNA(Asn) or phospho-Glu-tRNA(Gln). The protein is Aspartyl/glutamyl-tRNA(Asn/Gln) amidotransferase subunit B of Neisseria meningitidis serogroup A / serotype 4A (strain DSM 15465 / Z2491).